The sequence spans 207 residues: Proteasome subunit beta 2 (207 aa).

Positions 1-13 (METNNKLKILKTG) are cleaved as a propeptide — removed in mature form; by autocatalysis. T14 functions as the Nucleophile in the catalytic mechanism.

It belongs to the peptidase T1B family. The 20S proteasome core is composed of 14 alpha and 14 beta subunits that assemble into four stacked heptameric rings, resulting in a barrel-shaped structure. The two inner rings, each composed of seven catalytic beta subunits, are sandwiched by two outer rings, each composed of seven alpha subunits. The catalytic chamber with the active sites is on the inside of the barrel. Has a gated structure, the ends of the cylinder being occluded by the N-termini of the alpha-subunits. Is capped at one or both ends by the proteasome regulatory ATPase, PAN.

It is found in the cytoplasm. The catalysed reaction is Cleavage of peptide bonds with very broad specificity.. The formation of the proteasomal ATPase PAN-20S proteasome complex, via the docking of the C-termini of PAN into the intersubunit pockets in the alpha-rings, triggers opening of the gate for substrate entry. Interconversion between the open-gate and close-gate conformations leads to a dynamic regulation of the 20S proteasome proteolysis activity. Functionally, component of the proteasome core, a large protease complex with broad specificity involved in protein degradation. The sequence is that of Proteasome subunit beta 2 from Sulfurisphaera tokodaii (strain DSM 16993 / JCM 10545 / NBRC 100140 / 7) (Sulfolobus tokodaii).